The sequence spans 355 residues: Peptide chain release factor 1 (355 aa).

Glutamine 231 is modified (N5-methylglutamine).

It belongs to the prokaryotic/mitochondrial release factor family. Methylated by PrmC. Methylation increases the termination efficiency of RF1.

It localises to the cytoplasm. Its function is as follows. Peptide chain release factor 1 directs the termination of translation in response to the peptide chain termination codons UAG and UAA. The chain is Peptide chain release factor 1 from Nautilia profundicola (strain ATCC BAA-1463 / DSM 18972 / AmH).